The following is an 862-amino-acid chain: DNA mismatch repair protein MutS (862 aa).

ATP is bound at residue 603–610 (GPNMSGKS).

The protein belongs to the DNA mismatch repair MutS family.

In terms of biological role, this protein is involved in the repair of mismatches in DNA. It is possible that it carries out the mismatch recognition step. This protein has a weak ATPase activity. The sequence is that of DNA mismatch repair protein MutS from Bacillus velezensis (strain DSM 23117 / BGSC 10A6 / LMG 26770 / FZB42) (Bacillus amyloliquefaciens subsp. plantarum).